Here is a 1461-residue protein sequence, read N- to C-terminus: Selection and upkeep of intraepithelial T-cells protein 5 (1461 aa).

Positions 1-24 (MGAVGIPLTAHCVVLFLLQMVALS) are cleaved as a signal peptide. At 25 to 1306 (SEQFTVNGLE…CNKRNPFWKK (1282 aa)) the chain is on the extracellular side. The 114-residue stretch at 26–139 (EQFTVNGLES…FYEEHIIDVK (114 aa)) folds into the Ig-like V-type domain. Disulfide bonds link cysteine 49-cysteine 123 and cysteine 163-cysteine 217. The Ig-like C1-type domain maps to 142–231 (ATSSDIQILM…FVTHQEESIS (90 aa)). An N-linked (GlcNAc...) asparagine glycan is attached at asparagine 200. Residues 1307–1327 (YALDLGISVFTIIVVTLIMHL) traverse the membrane as a helical segment. Topologically, residues 1328–1345 (KQREADQHFELNTLWSKD) are cytoplasmic. A helical transmembrane segment spans residues 1346-1366 (TSVILCVLIMFNNRLKALIYF). The Extracellular segment spans residues 1367 to 1387 (RLYGFSPPGKAHKYIVNYILR). A helical membrane pass occupies residues 1388 to 1408 (FSHPVFCIVYSATILYMYLQI). At 1409–1427 (QNKDSLFSLYNSWMVEMEM) the chain is on the cytoplasmic side. Residues 1428–1448 (VLIFLLVIFNVKNIATVLLYF) traverse the membrane as a helical segment. Residues 1449–1461 (DSTTLRLFFWIKG) are Extracellular-facing.

This sequence belongs to the SKINT family. In terms of tissue distribution, expressed in skin and, to a lower extent, testis.

Its subcellular location is the membrane. In terms of biological role, may act by engaging a cell surface molecule on immature T-cells in the embryonic thymus. The chain is Selection and upkeep of intraepithelial T-cells protein 5 (Skint5) from Mus musculus (Mouse).